The following is a 142-amino-acid chain: Hemoglobin subunit beta-C (142 aa).

The region spanning 1–142 (MPNKALITGF…VASALAHRYH (142 aa)) is the Globin domain. Positions 59 and 88 each coordinate heme b.

The protein belongs to the globin family. As to quaternary structure, heterotetramer of two alpha chains and two beta chains. As to expression, red blood cells.

Its function is as follows. Involved in oxygen transport from the lung to the various peripheral tissues. The chain is Hemoglobin subunit beta-C (HBBC) from Capra hircus (Goat).